The following is a 660-amino-acid chain: UvrABC system protein B (660 aa).

Positions 26–414 constitute a Helicase ATP-binding domain; sequence KKVLAGQRHQ…PEMTEQIIRP (389 aa). 39–46 contacts ATP; it reads GATGTGKT. The Beta-hairpin signature appears at 92-115; the sequence is YYDYYQPEAYVPSTDTFIEKDASI. The 167-residue stretch at 430-596 folds into the Helicase C-terminal domain; the sequence is QIDNLIEEIR…TIRKEVRDVI (167 aa). Residues 624-659 enclose the UVR domain; that stretch reads EKVIEQMENEMKQAAKDLDFEKAAELRDVILELKAE.

It belongs to the UvrB family. In terms of assembly, forms a heterotetramer with UvrA during the search for lesions. Interacts with UvrC in an incision complex.

It is found in the cytoplasm. The UvrABC repair system catalyzes the recognition and processing of DNA lesions. A damage recognition complex composed of 2 UvrA and 2 UvrB subunits scans DNA for abnormalities. Upon binding of the UvrA(2)B(2) complex to a putative damaged site, the DNA wraps around one UvrB monomer. DNA wrap is dependent on ATP binding by UvrB and probably causes local melting of the DNA helix, facilitating insertion of UvrB beta-hairpin between the DNA strands. Then UvrB probes one DNA strand for the presence of a lesion. If a lesion is found the UvrA subunits dissociate and the UvrB-DNA preincision complex is formed. This complex is subsequently bound by UvrC and the second UvrB is released. If no lesion is found, the DNA wraps around the other UvrB subunit that will check the other stand for damage. The sequence is that of UvrABC system protein B from Oceanobacillus iheyensis (strain DSM 14371 / CIP 107618 / JCM 11309 / KCTC 3954 / HTE831).